The chain runs to 224 residues: uncharacterized protein (224 aa).

The chain crosses the membrane as a helical span at residues 21-41 (LTVILIIPIVYLGVCGCFEIV).

It localises to the membrane. This is an uncharacterized protein from Methanocaldococcus jannaschii (strain ATCC 43067 / DSM 2661 / JAL-1 / JCM 10045 / NBRC 100440) (Methanococcus jannaschii).